The primary structure comprises 1122 residues: Maestro heat-like repeat-containing protein family member 7 (1122 aa).

Disordered regions lie at residues 1-144 (MALS…LSED) and 183-203 (SHTI…NTSL). Residues 33–65 (TTPRPTPDLTLAPLPAHGVALAPALHPALSPDP) are compositionally biased toward low complexity. Polar residues-rich tracts occupy residues 75-95 (DISN…INTA), 120-136 (PVPS…SPEN), and 184-203 (HTIS…NTSL). 5 N-linked (GlcNAc...) asparagine glycosylation sites follow: Asn200, Asn210, Asn255, Asn267, and Asn296. A disordered region spans residues 246 to 265 (WNTGSKGSVNVTSNSQPRSG). Residue Ser356 is modified to Phosphoserine. Residues 363-385 (FRSPPEGTSEDAKANESEKRDHD) are disordered. Residues 372–385 (EDAKANESEKRDHD) show a composition bias toward basic and acidic residues. Asn541 and Asn546 each carry an N-linked (GlcNAc...) asparagine glycan. 2 consecutive transmembrane segments (helical) span residues 548-568 (TLVT…LLLG) and 722-742 (LLPI…ALLM). HEAT repeat units lie at residues 913 to 950 (QELC…MEQV), 992 to 1029 (TKVQ…GQAK), 1035 to 1072 (SVYI…KLRM), and 1080 to 1117 (EQLT…FFLL).

Its subcellular location is the membrane. This is Maestro heat-like repeat-containing protein family member 7 (Mroh7) from Rattus norvegicus (Rat).